The chain runs to 66 residues: Beta-toxin ChFII.9 (66 aa).

One can recognise an LCN-type CS-alpha/beta domain in the interval lysine 1–lysine 66. Cystine bridges form between cysteine 12-cysteine 65, cysteine 16-cysteine 41, cysteine 25-cysteine 46, and cysteine 29-cysteine 48. Residue lysine 66 is modified to Lysine amide.

Expressed by the venom gland.

The protein localises to the secreted. Beta toxins bind voltage independently at site-4 of sodium channels (Nav) and shift the activation voltage toward more negative potentials, thereby affecting sodium channel activation CC and promoting spontaneous and repetitive firing. The protein is Beta-toxin ChFII.9 of Centruroides hirsutipalpus (Scorpion).